The chain runs to 221 residues: Enolase-phosphatase E1 (221 aa).

It belongs to the HAD-like hydrolase superfamily. MasA/MtnC family. In terms of assembly, monomer. Mg(2+) is required as a cofactor.

It carries out the reaction 5-methylsulfanyl-2,3-dioxopentyl phosphate + H2O = 1,2-dihydroxy-5-(methylsulfanyl)pent-1-en-3-one + phosphate. The protein operates within amino-acid biosynthesis; L-methionine biosynthesis via salvage pathway; L-methionine from S-methyl-5-thio-alpha-D-ribose 1-phosphate: step 3/6. It participates in amino-acid biosynthesis; L-methionine biosynthesis via salvage pathway; L-methionine from S-methyl-5-thio-alpha-D-ribose 1-phosphate: step 4/6. Functionally, bifunctional enzyme that catalyzes the enolization of 2,3-diketo-5-methylthiopentyl-1-phosphate (DK-MTP-1-P) into the intermediate 2-hydroxy-3-keto-5-methylthiopentenyl-1-phosphate (HK-MTPenyl-1-P), which is then dephosphorylated to form the acireductone 1,2-dihydroxy-3-keto-5-methylthiopentene (DHK-MTPene). In Xanthobacter autotrophicus (strain ATCC BAA-1158 / Py2), this protein is Enolase-phosphatase E1.